Consider the following 242-residue polypeptide: Small ribosomal subunit protein uS2 (242 aa).

The protein belongs to the universal ribosomal protein uS2 family.

In Shewanella piezotolerans (strain WP3 / JCM 13877), this protein is Small ribosomal subunit protein uS2.